A 1309-amino-acid polypeptide reads, in one-letter code: Clustered mitochondria protein homolog (1309 aa).

The segment at 1–34 (MLLNGDCPESLKKEAAAAEPPRENGLDEAGPGDE) is disordered. Basic and acidic residues predominate over residues 9 to 25 (ESLKKEAAAAEPPRENG). Residues S279 and S281 each carry the phosphoserine modification. In terms of domain architecture, Clu spans 335-577 (RAEDAYTSRL…RTFPPDLNFL (243 aa)). The segment covering 636-651 (LETPSSLENGGPSSLE) has biased composition (polar residues). Residues 636 to 674 (LETPSSLENGGPSSLESKSEDPPGQEAGSEEEGSSASGL) are disordered. Residues S654, S664, and S723 each carry the phosphoserine modification. 4 TPR repeats span residues 978 to 1011 (AFHF…FNNV), 1020 to 1053 (CACL…SERV), 1104 to 1137 (ALLD…STKY), and 1146 to 1179 (ALSH…YKTQ). Residues 1264–1278 (HQLQEASRNRDRAEE) are compositionally biased toward basic and acidic residues. Residues 1264–1309 (HQLQEASRNRDRAEEPMATEPAPAGAPGDLGSQPPAAKDPSPSVQG) are disordered. Residues 1279–1290 (PMATEPAPAGAP) show a composition bias toward low complexity.

It belongs to the CLU family.

The protein resides in the cytoplasm. The protein localises to the cytoplasmic granule. Its function is as follows. mRNA-binding protein involved in proper cytoplasmic distribution of mitochondria. Specifically binds mRNAs of nuclear-encoded mitochondrial proteins in the cytoplasm and regulates transport or translation of these transcripts close to mitochondria, playing a role in mitochondrial biogenesis. The sequence is that of Clustered mitochondria protein homolog (CLUH) from Homo sapiens (Human).